A 231-amino-acid polypeptide reads, in one-letter code: MKIGIIGAMEQEVAILKAAISDITEVNKGGCTFFSGQLNGVDVVLLQSGIGKVAAAVGTSILLSEYQPDVVLNTGSAGGFDSTLNLGDVVISTEVRHHDADVTAFGYEIGQMAGQPAAFKADDKLMAVAEQALAQMEDKHAVRGLICTGDAFVCTAERQEFIRKHFPSVVAVEMEASAIAQACHQFQVPFVVVRAISDVADKESPMSFEEFLPLAAQSSSEMVIKMVALLK.

The active-site Proton acceptor is the glutamate 12. Residues glycine 78, valine 153, and 174–175 each bind substrate; that span reads ME. Aspartate 198 acts as the Proton donor in catalysis.

This sequence belongs to the PNP/UDP phosphorylase family. MtnN subfamily.

It carries out the reaction S-adenosyl-L-homocysteine + H2O = S-(5-deoxy-D-ribos-5-yl)-L-homocysteine + adenine. The enzyme catalyses S-methyl-5'-thioadenosine + H2O = 5-(methylsulfanyl)-D-ribose + adenine. It catalyses the reaction 5'-deoxyadenosine + H2O = 5-deoxy-D-ribose + adenine. It participates in amino-acid biosynthesis; L-methionine biosynthesis via salvage pathway; S-methyl-5-thio-alpha-D-ribose 1-phosphate from S-methyl-5'-thioadenosine (hydrolase route): step 1/2. Functionally, catalyzes the irreversible cleavage of the glycosidic bond in both 5'-methylthioadenosine (MTA) and S-adenosylhomocysteine (SAH/AdoHcy) to adenine and the corresponding thioribose, 5'-methylthioribose and S-ribosylhomocysteine, respectively. Also cleaves 5'-deoxyadenosine, a toxic by-product of radical S-adenosylmethionine (SAM) enzymes, into 5-deoxyribose and adenine. The protein is 5'-methylthioadenosine/S-adenosylhomocysteine nucleosidase of Vibrio atlanticus (strain LGP32) (Vibrio splendidus (strain Mel32)).